The primary structure comprises 149 residues: UPF0260 protein PFL_1499 (149 aa).

This sequence belongs to the UPF0260 family.

The protein is UPF0260 protein PFL_1499 of Pseudomonas fluorescens (strain ATCC BAA-477 / NRRL B-23932 / Pf-5).